A 538-amino-acid chain; its full sequence is Neutral protease B (538 aa).

The first 28 residues, 1 to 28, serve as a signal peptide directing secretion; it reads MRNLTKTSLLLAGLCTAAQMVFVTHASA. A propeptide spans 29–223 (activation peptide); sequence EESIEYDHTY…VIESFNAIHE (195 aa). Asp365 lines the Ca(2+) pocket. His369 is a binding site for Zn(2+). The active site involves Glu370. The Zn(2+) site is built by His373 and Glu393. Ca(2+) is bound by residues Asp404, Asp406, Asp407, Glu409, Glu412, Tyr415, Thr416, Ile419, and Asp422. The tract at residues 421–441 is disordered; it reads GDSLRSLEDPSKQGNPDHYSN. Catalysis depends on His453, which acts as the Proton donor.

It belongs to the peptidase M4 family. The cofactor is Zn(2+).

The protein localises to the secreted. With respect to regulation, protease activity can be inhibited in vitro by either a zinc specific chelator, 1,10-phenanthroline, or a metal chelator, EDTA. The enzyme is resistant to phenylmethylsulfonyl fluoride and iodoacetic acid. Its function is as follows. Protease able to cleave casein in vitro. The chain is Neutral protease B from Bacillus subtilis (strain 168).